The chain runs to 422 residues: Inositol phosphorylceramide synthase catalytic subunit aur1 (422 aa).

The Cytoplasmic portion of the chain corresponds to 1-47 (MSALSTLKKRLAACNRASQYKLETSLNPMPTFRLLRNTKWSWTHLQY). A run of 2 helical transmembrane segments spans residues 48-68 (VFLA…GFWG) and 69-85 (KFGI…VPLT). Residues 86–87 (RQ) lie on the Cytoplasmic side of the membrane. Residues 88–108 (IFFPAIVIITWAILFYSCRFI) form a helical membrane-spanning segment. Residues 109–159 (PERWRPPIWVRVLPTLENILYGSNLSSLLSKTTHSILDILAWVPYGVMHYS) are Lumenal-facing. N132 carries an N-linked (GlcNAc...) asparagine glycan. Residues 160 to 180 (APFIISFILFIFAPPGTLPVW) form a helical membrane-spanning segment. Topologically, residues 181-183 (ART) are cytoplasmic. Residues 184 to 204 (FGYMNLFGVLIQMAFPCSPPW) form a helical membrane-spanning segment. The Lumenal segment spans residues 205 to 245 (YENMYGLEPATYAVRGSPGGLARIDALFGTSIYTDGFSNSP). The helical transmembrane segment at 246-266 (VVFGAFPSLHAGWAMLEALFL) threads the bilayer. At 267–274 (SHVFPRYR) the chain is on the cytoplasmic side. Transmembrane regions (helical) follow at residues 275-292 (FCFY…MYLT) and 293-313 (HHYF…FVFA). Topologically, residues 314–422 (QKLRLPQLQT…SSIFDASHLP (109 aa)) are cytoplasmic. S353 carries the post-translational modification Phosphoserine. Positions 386-406 (EWSVGSSSPEPLPSPAADLID) are disordered.

This sequence belongs to the AUR1 family. Component of the inositol phosphorylceramide synthase complex composed of at least aur1 and kei1.

It is found in the golgi apparatus. The protein localises to the golgi stack membrane. With respect to regulation, inhibited by aureobasidin A (AbA). Functionally, catalytic component of the inositol phosphorylceramide synthase which catalyzes the addition of a phosphorylinositol group onto ceramide to form inositol phosphorylceramide, an essential step in sphingolipid biosynthesis. This Schizosaccharomyces pombe (strain 972 / ATCC 24843) (Fission yeast) protein is Inositol phosphorylceramide synthase catalytic subunit aur1 (aur1).